A 1666-amino-acid polypeptide reads, in one-letter code: Complement C3 (1666 aa).

The signal sequence occupies residues 1–22 (MGPAAGPSLLLLLLASVSLALG). Phosphoserine occurs at positions 70, 296, and 302. 13 cysteine pairs are disulfide-bonded: C557/C821, C630/C666, C698/C725, C699/C732, C712/C733, C878/C1517, C1106/C1163, C1363/C1493, C1394/C1462, C1510/C1515, C1522/C1593, C1540/C1664, and C1640/C1649. Residue S676 is modified to Phosphoserine. The Anaphylatoxin-like domain maps to 698–733 (CCEDGMRENPMQFSCQRRARYVSLGEACVKAFLDCC). N944 is a glycosylation site (N-linked (GlcNAc...) asparagine). Phosphoserine is present on S973. A cross-link (isoglutamyl cysteine thioester (Cys-Gln)) is located at residues 1015–1018 (CGEQ). Position 1326 is a phosphoserine (S1326). The NTR domain maps to 1522-1664 (CFIQLPEKIT…FTENMVVFGC (143 aa)). Position 1576 is a phosphoserine (S1576). An N-linked (GlcNAc...) asparagine glycan is attached at N1620. The interval 1637–1662 (AEECQDEENQQQCQDLGTFTENMVVF) is interaction with CFP/properdin.

In terms of assembly, in absence of complement activation, the C3 precursor is first processed by the removal of 4 Arg residues, forming two chains, beta and alpha, linked by a disulfide bond. As to quaternary structure, complement C3b is composed of complement C3b and complement C3 beta chains that are associated via disulfide bonds. Non-enzymatic component of the C5 convertase, also named C4bC2bC3b, composed of the serine protease complement C2b (C2), complement C3b, as well as complement C4b (C4). Non-enzymatic component of the C5 convertase of the alternative complement pathways composed of the serine protease complement CFB and complement C3b. Interacts with CFP; interaction takes place together with CFB in the alternative complement system and allows the complex to become active. Interacts with CR1 (via Sushi 8 and Sushi 9 domains). Interacts with CFH. Interacts with CFH. Interacts with CR2. In terms of assembly, during pregnancy, C3dg exists as a complex (probably a 2:2:2 heterohexamer) with AGT and the proform of PRG2. Interacts with CR2 (via the N-terminal Sushi domains 1 and 2). Post-translationally, C3 precursor is first processed by the removal of 4 Arg residues, forming two chains, beta and alpha, linked by a disulfide bond. During activation of the complement systems, the alpha chain is cleaved into C3a and C3b by the C3 convertase: C3b stays linked to the beta chain, while C3a is released in the plasma. The alpha chain is cleaved by the serine protease complement C2b component of the C3 convertase to generate C3a and C3b following activation by the classical, lectin and GZMK complement systems. The alpha chain is cleaved by CFB component of the C3 convertase to generate C3a and C3b following activation by the alternative complement system. In terms of processing, C3a is further processed by carboxypeptidases to release the C-terminal arginine residue generating the acylation stimulating protein (ASP). Levels of ASP are increased in adipocytes in the postprandial period and by insulin and dietary chylomicrons. Complement C3b is rapidly split in two positions by factor I (CFI) and a cofactor (CFH) to form iC3b (inactivated C3b) and C3f which is released. CFI and CFH catalyze proteolytic degradation of already-deposited complement C3b. Then iC3b is slowly cleaved (possibly by CFI) to form C3c (beta chain + alpha' chain fragment 1 + alpha' chain fragment 2), C3dg and C3f. Other proteases produce other fragments such as C3d or C3g. Post-translationally, upon activation, the internal thioester bond reacts with carbohydrate antigens on the target surface to form amide or ester bonds, leading to covalent association with the surface of pathogens. In terms of processing, complement C3b interacts with complement C4b via a thioester linkage. Phosphorylated by FAM20C in the extracellular medium.

It localises to the secreted. It is found in the cell surface. Complement activation is inhibited by VSIG4. In terms of biological role, precursor of non-enzymatic components of the classical, alternative, lectin and GZMK complement pathways, which consist in a cascade of proteins that leads to phagocytosis and breakdown of pathogens and signaling that strengthens the adaptive immune system. Its function is as follows. Non-enzymatic component of C5 convertase. Generated following cleavage by C3 convertase, it covalently attaches to the surface of pathogens, where it acts as an opsonin that marks the surface of antigens for removal. Complement C3b binds covalently via its reactive thioester, to cell surface carbohydrates or immune aggregates. Together with complement C4b, it then recruits the serine protease complement C2b to form the C5 convertase, which cleaves and activate C5, the next component of the complement pathways. In the alternative complement pathway, recruits the serine protease CFB to form the C5 convertase that cleaves and activates C5. Functionally, mediator of local inflammatory process released following cleavage by C3 convertase. Acts by binding to its receptor, C3AR1, activating G protein-coupled receptor signaling, promoting the phosphorylation, ARRB2-mediated internalization and endocytosis of C3AR1. C3a anaphylatoxin stimulates the activation of immune cells such as mast cells and basophilic leukocytes to release inflammation agents, such as cytokines, chemokines and histamine, which promote inflammation development. Also acts as potent chemoattractant for the migration of macrophages and neutrophils to the inflamed tissues, resulting in neutralization of the inflammatory triggers by multiple ways, such as phagocytosis and generation of reactive oxidants. Adipogenic hormone that stimulates triglyceride synthesis and glucose transport in adipocytes, regulating fat storage and playing a role in postprandial triglyceride clearance. Appears to stimulate triglyceride synthesis via activation of the PLC, MAPK and AKT signaling pathways. Acts by binding to its receptor, C5AR2, activating G protein-coupled receptor signaling, promoting the phosphorylation, ARRB2-mediated internalization and endocytosis of C5AR2. In terms of biological role, acts as a chemoattractant for neutrophils in chronic inflammation. The sequence is that of Complement C3 from Cavia porcellus (Guinea pig).